We begin with the raw amino-acid sequence, 444 residues long: MSTAPIKHEGFLTKEGGGFKSWKKRWFILKGGDLSYYKTKGELVPLGVIHLNTSGHIKNSDRKKRVNGFEVQTPSRTYFLCSETEEERAKWIEILINERELLLNGGKQPKKSEKVGVADFELLNLVGKGSFGKVIQVRKKDTGEVYAMKVLSKKHIVEHNEVEHTLSERNILQKINHPFLVNLNYSFQTEDKLYFILDYVNGGELFYHLQKDKKFTEDRVRYYGAEIVLALEHLHLSGVIYRDLKPENLLLTNEGHICMTDFGLCKEGLLTPTDKTGTFCGTPEYLAPEVLQGNGYGKQVDWWSFGSLLYEMLTGLPPFYNQDVQEMYRKIMMEKLSFPHFISPDARSLLEQLLERDPEKRLADPNLIKRHPFFRSIDWEQLFQKNIPPPFIPNVKGSADTSQIDPVFTDEAPSLTMAGECALNPQQQKDFEGFTYVAESEHLR.

The PH domain occupies 5–100 (PIKHEGFLTK…WIEILINERE (96 aa)). Positions 120 to 374 (FELLNLVGKG…PNLIKRHPFF (255 aa)) constitute a Protein kinase domain. Residues 126–134 (VGKGSFGKV) and Lys149 contribute to the ATP site. Asp243 (proton acceptor) is an active-site residue. Position 278 is a phosphothreonine (Thr278). Positions 375–444 (RSIDWEQLFQ…TYVAESEHLR (70 aa)) constitute an AGC-kinase C-terminal domain.

This sequence belongs to the protein kinase superfamily. AGC Ser/Thr protein kinase family. RAC subfamily.

It carries out the reaction L-seryl-[protein] + ATP = O-phospho-L-seryl-[protein] + ADP + H(+). It catalyses the reaction L-threonyl-[protein] + ATP = O-phospho-L-threonyl-[protein] + ADP + H(+). In terms of biological role, predominantly involved during the aggregation to control cell polarity and chemotaxis. Phosphorylates talB, gefN, gefS, PI4P 5-kinase and gacQ. The chain is RAC family serine/threonine-protein kinase homolog (pkbA) from Dictyostelium discoideum (Social amoeba).